A 73-amino-acid chain; its full sequence is Probable movement protein p8 (73 aa).

Residues 1-12 (MSTVETPAQDTL) show a composition bias toward polar residues. A disordered region spans residues 1–48 (MSTVETPAQDTLATKEPNKTGAKDRQQARSARLSVAAGAGRTALSQRD). Over residues 16-27 (EPNKTGAKDRQQ) the composition is skewed to basic and acidic residues.

The protein belongs to the carmovirus/necrovirus/panicovirus movement protein p8 family.

The protein localises to the host cell wall. In terms of biological role, cell-to-cell movement. This Muhlenbergia (Blackwell switchgrass) protein is Probable movement protein p8.